Reading from the N-terminus, the 209-residue chain is Large ribosomal subunit protein uL3 (209 aa).

An N5-methylglutamine modification is found at Gln150.

It belongs to the universal ribosomal protein uL3 family. Part of the 50S ribosomal subunit. Forms a cluster with proteins L14 and L19. Methylated by PrmB.

One of the primary rRNA binding proteins, it binds directly near the 3'-end of the 23S rRNA, where it nucleates assembly of the 50S subunit. This is Large ribosomal subunit protein uL3 from Proteus mirabilis (strain HI4320).